Consider the following 477-residue polypeptide: Nuclear receptor subfamily 6 group A member 1-A (477 aa).

The nuclear receptor DNA-binding region spans 40–115 (QRSCLICGDR…MGMNRKAIRE (76 aa)). 2 consecutive NR C4-type zinc fingers follow at residues 43-63 (CLIC…CEGC) and 79-98 (CSRD…CQYC). Residues 147-187 (DEANMPEHTWGNNGDSDHSSPGNGVSDGNQPSPVSTLSSNR) form a disordered region. Over residues 156–187 (WGNNGDSDHSSPGNGVSDGNQPSPVSTLSSNR) the composition is skewed to polar residues. In terms of domain architecture, NR LBD spans 230 to 461 (QSHTLIGQLV…HSCKSSLSSY (232 aa)).

The protein belongs to the nuclear hormone receptor family. NR6 subfamily. As to quaternary structure, homodimer. As to expression, expressed in germ cells, being predominant in previtellogenic oocytes in the ovary and in spermatocytes in the testis.

The protein resides in the nucleus. Probable orphan nuclear receptor. Binds to a response element containing repeats of the motif 5'-AGGTCA-3'. This Danio rerio (Zebrafish) protein is Nuclear receptor subfamily 6 group A member 1-A.